The following is a 321-amino-acid chain: Fe-S cluster assembly protein DRE2 (321 aa).

The segment at 1 to 140 (MNNTAHSMSE…RRPASSSVAE (140 aa)) is N-terminal SAM-like domain. The span at 128–138 (IESRRPASSSV) shows a compositional bias: polar residues. Positions 128–166 (IESRRPASSSVAEKDSTASSGMGAVKLRRKPNENGGHQQ) are disordered. Positions 140 to 177 (EKDSTASSGMGAVKLRRKPNENGGHQQKKALLWATQPE) are linker. Residues Cys-202, Cys-217, Cys-220, and Cys-222 each contribute to the [2Fe-2S] cluster site. The interval 202–222 (CTVDFSAPRTRRKRACKGCTC) is fe-S binding site A. A disordered region spans residues 239–263 (QLDPSEVGGTGGKRTEVTTTVKGPN). [4Fe-4S] cluster contacts are provided by Cys-283, Cys-286, Cys-294, and Cys-297. 2 consecutive short sequence motifs (cx2C motif) follow at residues 283–286 (CGSC) and 294–297 (CSSC). The segment at 283-297 (CGSCFLGDAFRCSSC) is fe-S binding site B.

Belongs to the anamorsin family. In terms of assembly, monomer. Interacts with TAH18. Interacts with MIA40. It depends on [2Fe-2S] cluster as a cofactor. [4Fe-4S] cluster serves as cofactor.

It is found in the cytoplasm. Its subcellular location is the mitochondrion intermembrane space. Its function is as follows. Component of the cytosolic iron-sulfur (Fe-S) protein assembly (CIA) machinery required for the maturation of extramitochondrial Fe-S proteins. Part of an electron transfer chain functioning in an early step of cytosolic Fe-S biogenesis, facilitating the de novo assembly of a [4Fe-4S] cluster on the scaffold complex CFD1-NBP35. Electrons are transferred to DRE2 from NADPH via the FAD- and FMN-containing protein TAH18. TAH18-DRE2 are also required for the assembly of the diferric tyrosyl radical cofactor of ribonucleotide reductase (RNR), probably by providing electrons for reduction during radical cofactor maturation in the catalytic small subunit RNR2. This is Fe-S cluster assembly protein DRE2 from Malassezia globosa (strain ATCC MYA-4612 / CBS 7966) (Dandruff-associated fungus).